The sequence spans 890 residues: Agglutinin-like protein ARB_02240 (890 aa).

The N-terminal stretch at 1–20 is a signal peptide; the sequence is MRLTTSVLLWAATSVLQADA. N-linked (GlcNAc...) asparagine glycosylation is found at Asn-106, Asn-217, Asn-583, and Asn-654. The segment at 680-872 is disordered; the sequence is IPSGPTTRPE…GGAGSLSPST (193 aa). Low complexity-rich tracts occupy residues 693–753 and 760–790; these read TSST…TDSS and TTSTAESTETTEPTSTDASTESTSTATHSST. Residues 791–802 are compositionally biased toward polar residues; that stretch reads GSDPESTNTRHP. Low complexity-rich tracts occupy residues 803-812 and 821-837; these read SSTASGSTTT and SSSSEGPVPTSMGTATT. The segment covering 838–848 has biased composition (gly residues); the sequence is TGGGSIPGSGT. The GPI-anchor amidated glycine moiety is linked to residue Gly-864. Positions 865 to 890 are cleaved as a propeptide — removed in mature form; sequence AGSLSPSTWGKVVTCISSMALLVAFI.

This sequence belongs to the ALS family. In terms of processing, the GPI-anchor is attached to the protein in the endoplasmic reticulum and serves to target the protein to the cell surface. There, the glucosamine-inositol phospholipid moiety is cleaved off and the GPI-modified mannoprotein is covalently attached via its lipidless GPI glycan remnant to the 1,6-beta-glucan of the outer cell wall layer.

Its subcellular location is the secreted. The protein resides in the cell membrane. It is found in the cell wall. Cell surface adhesion protein which mediates cell agglutination and host tissue adherence. This chain is Agglutinin-like protein ARB_02240, found in Arthroderma benhamiae (strain ATCC MYA-4681 / CBS 112371) (Trichophyton mentagrophytes).